Consider the following 284-residue polypeptide: Pantothenate synthetase (284 aa).

30 to 37 (MGALHDGH) is an ATP binding site. His37 functions as the Proton donor in the catalytic mechanism. Gln61 contributes to the (R)-pantoate binding site. A beta-alanine-binding site is contributed by Gln61. 147–150 (GEKD) contributes to the ATP binding site. Residue Gln153 coordinates (R)-pantoate. Residues Val176 and 184–187 (KSSR) contribute to the ATP site.

It belongs to the pantothenate synthetase family. Homodimer.

Its subcellular location is the cytoplasm. It catalyses the reaction (R)-pantoate + beta-alanine + ATP = (R)-pantothenate + AMP + diphosphate + H(+). The protein operates within cofactor biosynthesis; (R)-pantothenate biosynthesis; (R)-pantothenate from (R)-pantoate and beta-alanine: step 1/1. Its function is as follows. Catalyzes the condensation of pantoate with beta-alanine in an ATP-dependent reaction via a pantoyl-adenylate intermediate. This is Pantothenate synthetase from Chloroherpeton thalassium (strain ATCC 35110 / GB-78).